We begin with the raw amino-acid sequence, 60 residues long: Beta-toxin BotIT2 (60 aa).

The region spanning 1–60 is the LCN-type CS-alpha/beta domain; sequence DGYIKGYKGCKITCVINDDYCDTECKAEGGTYGYCWKWGLACWCEDLPDEKRWKSETNTC. 4 disulfides stabilise this stretch: cysteine 10/cysteine 60, cysteine 14/cysteine 35, cysteine 21/cysteine 42, and cysteine 25/cysteine 44.

Belongs to the long (4 C-C) scorpion toxin superfamily. Sodium channel inhibitor family. Beta subfamily. In terms of tissue distribution, expressed by the venom gland.

The protein localises to the secreted. Functionally, beta toxins bind voltage-independently at site-4 of sodium channels (Nav) and shift the voltage of activation toward more negative potentials thereby affecting sodium channel activation and promoting spontaneous and repetitive firing. This toxin specifically acts by inducing a new current with very slow activation/deactivation kinetics due to the transformation of normal fast channels into slow ones. It possess properties of excitatory and depressant toxins. It is highly active on insects and less active on mammals. This chain is Beta-toxin BotIT2, found in Buthus occitanus tunetanus (Common European scorpion).